The primary structure comprises 158 residues: SsrA-binding protein (158 aa).

Residues 133-148 are compositionally biased toward basic and acidic residues; sequence KAQDKRETSAKRDWNR. The disordered stretch occupies residues 133-158; it reads KAQDKRETSAKRDWNRQKARLLKQNG. A compositionally biased stretch (basic residues) spans 149 to 158; sequence QKARLLKQNG.

The protein belongs to the SmpB family.

It localises to the cytoplasm. Required for rescue of stalled ribosomes mediated by trans-translation. Binds to transfer-messenger RNA (tmRNA), required for stable association of tmRNA with ribosomes. tmRNA and SmpB together mimic tRNA shape, replacing the anticodon stem-loop with SmpB. tmRNA is encoded by the ssrA gene; the 2 termini fold to resemble tRNA(Ala) and it encodes a 'tag peptide', a short internal open reading frame. During trans-translation Ala-aminoacylated tmRNA acts like a tRNA, entering the A-site of stalled ribosomes, displacing the stalled mRNA. The ribosome then switches to translate the ORF on the tmRNA; the nascent peptide is terminated with the 'tag peptide' encoded by the tmRNA and targeted for degradation. The ribosome is freed to recommence translation, which seems to be the essential function of trans-translation. This is SsrA-binding protein from Jannaschia sp. (strain CCS1).